A 145-amino-acid polypeptide reads, in one-letter code: 3-dehydroquinate dehydratase (145 aa).

Catalysis depends on tyrosine 23, which acts as the Proton acceptor. Substrate is bound by residues asparagine 75, histidine 81, and aspartate 88. Histidine 101 serves as the catalytic Proton donor. Substrate contacts are provided by residues 102–103 and arginine 112; that span reads IS.

It belongs to the type-II 3-dehydroquinase family. As to quaternary structure, homododecamer.

The enzyme catalyses 3-dehydroquinate = 3-dehydroshikimate + H2O. The protein operates within metabolic intermediate biosynthesis; chorismate biosynthesis; chorismate from D-erythrose 4-phosphate and phosphoenolpyruvate: step 3/7. Its function is as follows. Catalyzes a trans-dehydration via an enolate intermediate. The polypeptide is 3-dehydroquinate dehydratase (Caldicellulosiruptor saccharolyticus (strain ATCC 43494 / DSM 8903 / Tp8T 6331)).